Consider the following 398-residue polypeptide: 1-deoxy-D-xylulose 5-phosphate reductoisomerase (398 aa).

NADPH is bound by residues threonine 11, glycine 12, serine 13, isoleucine 14, and asparagine 125. Residue lysine 126 coordinates 1-deoxy-D-xylulose 5-phosphate. An NADPH-binding site is contributed by glutamate 127. Aspartate 151 lines the Mn(2+) pocket. Serine 152, glutamate 153, serine 186, and histidine 209 together coordinate 1-deoxy-D-xylulose 5-phosphate. Glutamate 153 is a Mn(2+) binding site. Position 215 (glycine 215) interacts with NADPH. 1-deoxy-D-xylulose 5-phosphate contacts are provided by serine 222, asparagine 227, lysine 228, and glutamate 231. Glutamate 231 serves as a coordination point for Mn(2+).

It belongs to the DXR family. It depends on Mg(2+) as a cofactor. Mn(2+) is required as a cofactor.

The enzyme catalyses 2-C-methyl-D-erythritol 4-phosphate + NADP(+) = 1-deoxy-D-xylulose 5-phosphate + NADPH + H(+). Its pathway is isoprenoid biosynthesis; isopentenyl diphosphate biosynthesis via DXP pathway; isopentenyl diphosphate from 1-deoxy-D-xylulose 5-phosphate: step 1/6. Functionally, catalyzes the NADPH-dependent rearrangement and reduction of 1-deoxy-D-xylulose-5-phosphate (DXP) to 2-C-methyl-D-erythritol 4-phosphate (MEP). This is 1-deoxy-D-xylulose 5-phosphate reductoisomerase from Acinetobacter baumannii (strain ATCC 17978 / DSM 105126 / CIP 53.77 / LMG 1025 / NCDC KC755 / 5377).